The following is an 86-amino-acid chain: Venom metalloproteinase (86 aa).

D7 provides a ligand contact to Ca(2+). H67 serves as a coordination point for Zn(2+). The active site involves E68. Zn(2+) contacts are provided by H71 and H77.

This sequence belongs to the venom metalloproteinase (M12B) family. It depends on Zn(2+) as a cofactor. As to expression, expressed by the venom gland.

The protein localises to the secreted. This Tityus serrulatus (Brazilian scorpion) protein is Venom metalloproteinase.